The primary structure comprises 309 residues: Ribosomal RNA small subunit methyltransferase H (309 aa).

S-adenosyl-L-methionine-binding positions include 33 to 35 (GGH), Asp-53, Phe-79, Asp-100, and Gln-107.

Belongs to the methyltransferase superfamily. RsmH family.

The protein resides in the cytoplasm. The catalysed reaction is cytidine(1402) in 16S rRNA + S-adenosyl-L-methionine = N(4)-methylcytidine(1402) in 16S rRNA + S-adenosyl-L-homocysteine + H(+). Specifically methylates the N4 position of cytidine in position 1402 (C1402) of 16S rRNA. This Clostridium botulinum (strain Kyoto / Type A2) protein is Ribosomal RNA small subunit methyltransferase H.